The following is a 109-amino-acid chain: MKVIHGIRVYEKGEKVFFETEMPSIPEYMYSKFGWKIIEIDGKNYWAPMEEEEYIHIVAKYLGISPSEVDLNLVHCGTMGDNGCFGDCTGNRFCKRWSTGDSTGCICGA.

This is an uncharacterized protein from Bacillus subtilis (strain 168).